Reading from the N-terminus, the 425-residue chain is Serine hydroxymethyltransferase (425 aa).

(6S)-5,6,7,8-tetrahydrofolate-binding positions include Leu-128 and 132 to 134; that span reads GHL. Lys-237 carries the post-translational modification N6-(pyridoxal phosphate)lysine.

Belongs to the SHMT family. Homodimer. The cofactor is pyridoxal 5'-phosphate.

The protein localises to the cytoplasm. It catalyses the reaction (6R)-5,10-methylene-5,6,7,8-tetrahydrofolate + glycine + H2O = (6S)-5,6,7,8-tetrahydrofolate + L-serine. It functions in the pathway one-carbon metabolism; tetrahydrofolate interconversion. Its pathway is amino-acid biosynthesis; glycine biosynthesis; glycine from L-serine: step 1/1. In terms of biological role, catalyzes the reversible interconversion of serine and glycine with tetrahydrofolate (THF) serving as the one-carbon carrier. This reaction serves as the major source of one-carbon groups required for the biosynthesis of purines, thymidylate, methionine, and other important biomolecules. Also exhibits THF-independent aldolase activity toward beta-hydroxyamino acids, producing glycine and aldehydes, via a retro-aldol mechanism. This is Serine hydroxymethyltransferase from Wolbachia pipientis wMel.